The sequence spans 1237 residues: Tyrosine-protein kinase sid-3 (1237 aa).

The region spanning 107 to 369 is the Protein kinase domain; the sequence is IKLYELIGEG…REDLVAAMFL (263 aa). ATP is bound by residues 113–121 and lysine 139; that span reads IGEGSFAVV. The Proton acceptor role is filled by aspartate 230. The SH3 domain occupies 366-426; the sequence is AMFLDAVARE…PRSVVFAQTN (61 aa). Disordered stretches follow at residues 683-704, 741-802, 826-919, 940-986, 999-1018, and 1134-1156; these read NQGSSTGNGVRPRPASSIGIQN, PPAP…APVQ, IQPQ…EERR, SNST…SEPI, SATTSQAKPVTQPIRHPSPP, and QQRQAGSSSRAVPPASASTSAAS. Polar residues-rich tracts occupy residues 749–766, 778–791, and 847–863; these read QPVSSQRVAQQQQNTLQK, KRPTGTTAPPSNGF, and SAPTHSNVAPTTSSQAS. 2 stretches are compositionally biased toward low complexity: residues 881-910 and 940-961; these read TPITVAPVHAAPTTSAPSTSVVTRRPTSTT and SNSTSSLPSAAVSTASSVPSTA. Over residues 1138 to 1156 the composition is skewed to low complexity; it reads AGSSSRAVPPASASTSAAS.

It belongs to the protein kinase superfamily. Tyr protein kinase family. SYK/ZAP-70 subfamily. As to expression, ubiquitously present in all tissues tested. Expressed in the somatic cells of gut, pharynx, body wall muscle, neurons, skin and excretory canal cells.

The protein resides in the cytoplasm. It carries out the reaction L-tyrosyl-[protein] + ATP = O-phospho-L-tyrosyl-[protein] + ADP + H(+). Functionally, tyrosine-protein kinase which plays a role in RNA-mediated gene silencing by mediating import of double-stranded RNA (dsRNA) into cells. Not required for import of ingested dsRNA into intestinal cells but involved in subsequent export from intestinal cells to internal tissues. The chain is Tyrosine-protein kinase sid-3 (sid-3) from Caenorhabditis elegans.